The primary structure comprises 352 residues: Transcriptional regulatory protein AlgP (352 aa).

Residues 128–352 are disordered; sequence KALESRKAKP…SNGAAPTSAS (225 aa). Low complexity predominate over residues 138–341; it reads ATKPAAKAAA…SSAASATPAA (204 aa).

Functionally, the promoter for a critical alginate biosynthetic gene, AlgD, encoding GDP-mannose dehydrogenase, is activated only under conditions reminiscent of the cystic fibrosis lung (i.e. under high osmolarity), and at least two regulatory genes, AlgP and AlgQ, have been implicated in this activation process. The chain is Transcriptional regulatory protein AlgP (algP) from Pseudomonas aeruginosa (strain ATCC 15692 / DSM 22644 / CIP 104116 / JCM 14847 / LMG 12228 / 1C / PRS 101 / PAO1).